The following is an 862-amino-acid chain: DNA mismatch repair protein MutS (862 aa).

608–615 serves as a coordination point for ATP; the sequence is GPNMAGKS.

It belongs to the DNA mismatch repair MutS family.

Its function is as follows. This protein is involved in the repair of mismatches in DNA. It is possible that it carries out the mismatch recognition step. This protein has a weak ATPase activity. This Bacteroides fragilis (strain YCH46) protein is DNA mismatch repair protein MutS.